Here is an 80-residue protein sequence, read N- to C-terminus: Small ribosomal subunit protein bS16 (80 aa).

This sequence belongs to the bacterial ribosomal protein bS16 family.

In Acholeplasma laidlawii (strain PG-8A), this protein is Small ribosomal subunit protein bS16.